Reading from the N-terminus, the 296-residue chain is Sulfate adenylyltransferase subunit 2 (296 aa).

This sequence belongs to the PAPS reductase family. CysD subfamily. Heterodimer composed of CysD, the smaller subunit, and CysN.

The enzyme catalyses sulfate + ATP + H(+) = adenosine 5'-phosphosulfate + diphosphate. The protein operates within sulfur metabolism; hydrogen sulfide biosynthesis; sulfite from sulfate: step 1/3. Its function is as follows. With CysN forms the ATP sulfurylase (ATPS) that catalyzes the adenylation of sulfate producing adenosine 5'-phosphosulfate (APS) and diphosphate, the first enzymatic step in sulfur assimilation pathway. APS synthesis involves the formation of a high-energy phosphoric-sulfuric acid anhydride bond driven by GTP hydrolysis by CysN coupled to ATP hydrolysis by CysD. The polypeptide is Sulfate adenylyltransferase subunit 2 (Rhodospirillum rubrum (strain ATCC 11170 / ATH 1.1.1 / DSM 467 / LMG 4362 / NCIMB 8255 / S1)).